Here is a 513-residue protein sequence, read N- to C-terminus: Sphingosine-1-phosphate transporter SPNS2 (513 aa).

The next 11 helical transmembrane spans lie at 102 to 122 (GLLQTVFICSFMVAAPIFGYL), 130 to 150 (VILSSGIFFWSAITFSSSFIP), 163 to 183 (LVGIGEASYSTIAPTIIGDLF), 190 to 210 (LMLSVFYFAIPLGSGLGYITG), 222 to 242 (WALRVSPVLGVITGTLLLIFV), 276 to 296 (LATSTVSFATGALGMWIPLYL), 320 to 340 (LIFGAITCLTGFLGVIIGAGA), 354 to 374 (LVCAVGMLGSAIFICLVFVAA), 378 to 398 (IIAAYICIFAGETLLFSNWAI), 422 to 442 (TSHLLGDAGSPYLIGFISDLI), and 463 to 483 (LCPFVVVLGGMFFLATALFFL).

This sequence belongs to the major facilitator superfamily. Spinster (TC 2.A.1.49) family.

The protein resides in the cell membrane. Its subcellular location is the endosome membrane. The catalysed reaction is sphing-4-enine 1-phosphate(in) = sphing-4-enine 1-phosphate(out). It catalyses the reaction sphinganine 1-phosphate(in) = sphinganine 1-phosphate(out). Functionally, lipid transporter that specifically mediates export of sphingosine-1-phosphate (sphing-4-enine 1-phosphate, S1P) and sphinganine-1-phosphate. The chain is Sphingosine-1-phosphate transporter SPNS2 (spns2) from Xenopus tropicalis (Western clawed frog).